The primary structure comprises 420 residues: 3-phosphoshikimate 1-carboxyvinyltransferase (420 aa).

3-phosphoshikimate contacts are provided by K20, S21, and R25. Residue K20 coordinates phosphoenolpyruvate. Position 119 (R119) interacts with phosphoenolpyruvate. Positions 161, 162, 163, 189, 303, 326, and 330 each coordinate 3-phosphoshikimate. Q163 is a phosphoenolpyruvate binding site. The active-site Proton acceptor is D303. R334, R375, and K400 together coordinate phosphoenolpyruvate.

Belongs to the EPSP synthase family. As to quaternary structure, monomer.

Its subcellular location is the cytoplasm. It catalyses the reaction 3-phosphoshikimate + phosphoenolpyruvate = 5-O-(1-carboxyvinyl)-3-phosphoshikimate + phosphate. Its pathway is metabolic intermediate biosynthesis; chorismate biosynthesis; chorismate from D-erythrose 4-phosphate and phosphoenolpyruvate: step 6/7. In terms of biological role, catalyzes the transfer of the enolpyruvyl moiety of phosphoenolpyruvate (PEP) to the 5-hydroxyl of shikimate-3-phosphate (S3P) to produce enolpyruvyl shikimate-3-phosphate and inorganic phosphate. The sequence is that of 3-phosphoshikimate 1-carboxyvinyltransferase from Dehalococcoides mccartyi (strain ATCC BAA-2266 / KCTC 15142 / 195) (Dehalococcoides ethenogenes (strain 195)).